Reading from the N-terminus, the 147-residue chain is Large ribosomal subunit protein uL13 (147 aa).

The interval 127 to 147 (GPEHPHSAQQPKVLEIQGAAR) is disordered.

The protein belongs to the universal ribosomal protein uL13 family. Part of the 50S ribosomal subunit.

This protein is one of the early assembly proteins of the 50S ribosomal subunit, although it is not seen to bind rRNA by itself. It is important during the early stages of 50S assembly. The chain is Large ribosomal subunit protein uL13 from Verminephrobacter eiseniae (strain EF01-2).